A 330-amino-acid polypeptide reads, in one-letter code: Phosphate acyltransferase (330 aa).

It belongs to the PlsX family. As to quaternary structure, homodimer. Probably interacts with PlsY.

The protein localises to the cytoplasm. The catalysed reaction is a fatty acyl-[ACP] + phosphate = an acyl phosphate + holo-[ACP]. The protein operates within lipid metabolism; phospholipid metabolism. Functionally, catalyzes the reversible formation of acyl-phosphate (acyl-PO(4)) from acyl-[acyl-carrier-protein] (acyl-ACP). This enzyme utilizes acyl-ACP as fatty acyl donor, but not acyl-CoA. This Streptococcus agalactiae serotype III (strain NEM316) protein is Phosphate acyltransferase.